The primary structure comprises 599 residues: Replication protein E1 (599 aa).

Positions 78 to 80 (KRK) match the Nuclear localization signal motif. Ser84 and Ser93 each carry phosphoserine; by host. The Nuclear export signal motif lies at 92-101 (LSPQLQAVKI). Residues 124–140 (NSLTQVESESQAGPSSQ) are compositionally biased toward polar residues. Positions 124–144 (NSLTQVESESQAGPSSQDGGG) are disordered. The DNA-binding region stretch occupies residues 139–303 (SQDGGGDINL…LVSHQAATTA (165 aa)). An SF3 helicase domain is found at 402 to 552 (VNILSFLIVL…MPILDDGSPM (151 aa)). Residue 428-435 (GPPDTGKS) participates in ATP binding. Lys509 is covalently cross-linked (Glycyl lysine isopeptide (Lys-Gly) (interchain with G-Cter in SUMO)). A disordered region spans residues 575–599 (DPEEENNGVPSRTFRCTSRSNSDSY). The segment covering 582 to 599 (GVPSRTFRCTSRSNSDSY) has biased composition (polar residues).

Belongs to the papillomaviridae E1 protein family. In terms of assembly, can form hexamers. Interacts with E2 protein; this interaction increases E1 DNA binding specificity. Interacts with host DNA polymerase subunit POLA2. Interacts with host single stranded DNA-binding protein RPA1. Interacts with host TOP1; this interaction stimulates the enzymatic activity of TOP1. In terms of processing, phosphorylated. Sumoylated.

The protein resides in the host nucleus. It catalyses the reaction Couples ATP hydrolysis with the unwinding of duplex DNA by translocating in the 3'-5' direction.. The catalysed reaction is ATP + H2O = ADP + phosphate + H(+). ATP-dependent DNA 3'-5' helicase required for initiation of viral DNA replication. It forms a complex with the viral E2 protein. The E1-E2 complex binds to the replication origin which contains binding sites for both proteins. During the initial step, a dimer of E1 interacts with a dimer of protein E2 leading to a complex that binds the viral origin of replication with high specificity. Then, a second dimer of E1 displaces the E2 dimer in an ATP-dependent manner to form the E1 tetramer. Following this, two E1 monomers are added to each half of the site, which results in the formation of two E1 trimers on the viral ori. Subsequently, two hexamers will be created. The double hexamer acts as a bi-directional helicase machinery and unwinds the viral DNA and then recruits the host DNA polymerase to start replication. This chain is Replication protein E1, found in Homo sapiens (Human).